The sequence spans 166 residues: NAD(P)H-quinone oxidoreductase subunit I, chloroplastic (166 aa).

2 4Fe-4S ferredoxin-type domains span residues 55–84 (GRIHFEFDKCIACEVCVRVCPIDLPVVDWK) and 95–124 (LNYSIDFGICIFCGNCVEYCPTNCLSMTEE). Positions 64, 67, 70, 74, 104, 107, 110, and 114 each coordinate [4Fe-4S] cluster.

Belongs to the complex I 23 kDa subunit family. In terms of assembly, NDH is composed of at least 16 different subunits, 5 of which are encoded in the nucleus. Requires [4Fe-4S] cluster as cofactor.

Its subcellular location is the plastid. It localises to the chloroplast thylakoid membrane. The catalysed reaction is a plastoquinone + NADH + (n+1) H(+)(in) = a plastoquinol + NAD(+) + n H(+)(out). The enzyme catalyses a plastoquinone + NADPH + (n+1) H(+)(in) = a plastoquinol + NADP(+) + n H(+)(out). NDH shuttles electrons from NAD(P)H:plastoquinone, via FMN and iron-sulfur (Fe-S) centers, to quinones in the photosynthetic chain and possibly in a chloroplast respiratory chain. The immediate electron acceptor for the enzyme in this species is believed to be plastoquinone. Couples the redox reaction to proton translocation, and thus conserves the redox energy in a proton gradient. This Ambrosia trifida (Giant ragweed) protein is NAD(P)H-quinone oxidoreductase subunit I, chloroplastic.